The chain runs to 515 residues: Bifunctional purine biosynthesis protein PurH (515 aa).

The 145-residue stretch at 1–145 folds into the MGS-like domain; that stretch reads MTKRALISVS…KNHASVTVVV (145 aa).

It belongs to the PurH family.

The enzyme catalyses (6R)-10-formyltetrahydrofolate + 5-amino-1-(5-phospho-beta-D-ribosyl)imidazole-4-carboxamide = 5-formamido-1-(5-phospho-D-ribosyl)imidazole-4-carboxamide + (6S)-5,6,7,8-tetrahydrofolate. It carries out the reaction IMP + H2O = 5-formamido-1-(5-phospho-D-ribosyl)imidazole-4-carboxamide. It participates in purine metabolism; IMP biosynthesis via de novo pathway; 5-formamido-1-(5-phospho-D-ribosyl)imidazole-4-carboxamide from 5-amino-1-(5-phospho-D-ribosyl)imidazole-4-carboxamide (10-formyl THF route): step 1/1. The protein operates within purine metabolism; IMP biosynthesis via de novo pathway; IMP from 5-formamido-1-(5-phospho-D-ribosyl)imidazole-4-carboxamide: step 1/1. This is Bifunctional purine biosynthesis protein PurH from Streptococcus equi subsp. zooepidemicus (strain H70).